We begin with the raw amino-acid sequence, 707 residues long: Elongation factor G (707 aa).

Residues 9-293 (HDVRNIGIMA…GVVDYLPSPE (285 aa)) form the tr-type G domain. GTP is bound by residues 18-25 (AHIDAGKT), 90-94 (DTPGH), and 144-147 (NKMD).

Belongs to the TRAFAC class translation factor GTPase superfamily. Classic translation factor GTPase family. EF-G/EF-2 subfamily.

Its subcellular location is the cytoplasm. In terms of biological role, catalyzes the GTP-dependent ribosomal translocation step during translation elongation. During this step, the ribosome changes from the pre-translocational (PRE) to the post-translocational (POST) state as the newly formed A-site-bound peptidyl-tRNA and P-site-bound deacylated tRNA move to the P and E sites, respectively. Catalyzes the coordinated movement of the two tRNA molecules, the mRNA and conformational changes in the ribosome. This chain is Elongation factor G, found in Bifidobacterium longum (strain DJO10A).